Reading from the N-terminus, the 705-residue chain is Dolichyl-diphosphooligosaccharide--protein glycosyltransferase subunit STT3A (705 aa).

Residues 1–15 are Cytoplasmic-facing; it reads MTKLGFLRLSYEKQD. A helical transmembrane segment spans residues 16–34; it reads TLLKLLILSMAAVLSFSTR. At 35–111 the chain is on the lumenal side; that stretch reads LFAVLRFESV…VLHFFHITID (77 aa). The DXD motif 1 signature appears at 47-49; it reads EFD. Asp-49 contacts Mn(2+). A helical membrane pass occupies residues 112-141; it reads IRNVCVFLAPLFSSFTTIVTYHLTKELKDA. Gly-142 is a topological domain (cytoplasmic). A helical transmembrane segment spans residues 143–158; the sequence is AGLLAAAMIAVVPGYI. The Lumenal portion of the chain corresponds to 159–170; the sequence is SRSVAGSYDNEG. Asp-167 and Glu-169 together coordinate Mn(2+). Positions 167–169 match the DXD motif 2 motif; that stretch reads DNE. Residues 171–188 traverse the membrane as a helical segment; that stretch reads IAIFCMLLTYYMWIKAVK. The Cytoplasmic segment spans residues 189–191; sequence TGS. The helical transmembrane segment at 192–207 threads the bilayer; sequence IYWAAKCALAYFYMVS. Residues 208–210 are Lumenal-facing; that stretch reads SWG. A helical membrane pass occupies residues 211–229; sequence GYVFLINLIPLHVLVLMLT. Residues 230–234 lie on the Cytoplasmic side of the membrane; the sequence is GRFSH. The chain crosses the membrane as a helical span at residues 235 to 253; it reads RIYVAYCTVYCLGTILSMQ. At 254–265 the chain is on the lumenal side; it reads ISFVGFQPVLSS. Residues 266–283 form a helical membrane-spanning segment; the sequence is EHMAAFGVFGLCQIHAFV. At 284–298 the chain is on the cytoplasmic side; the sequence is DYLRSKLNPQQFEVL. The chain crosses the membrane as a helical span at residues 299–317; the sequence is FRSVISLVGFVLLTVGALL. Residues 318–356 lie on the Lumenal side of the membrane; that stretch reads MLTGKISPWTGRFYSLLDPSYAKNNIPIIASVSEHQPTT. The SVSE motif motif lies at 348–351; sequence SVSE. The helical transmembrane segment at 357–379 threads the bilayer; the sequence is WSSYYFDLQLLVFMFPVGLYYCF. Topologically, residues 380–385 are cytoplasmic; the sequence is SNLSDA. Residues 386 to 402 traverse the membrane as a helical segment; the sequence is RIFIIMYGVTSMYFSAV. Topologically, residues 403 to 406 are lumenal; sequence MVRL. Dolichyl diphosphooligosaccharide is bound at residue Arg-405. The chain crosses the membrane as a helical span at residues 407-428; it reads MLVLAPVMCILSGIGVSQVLST. Residues 429–453 are Cytoplasmic-facing; it reads YMKNLDISRPDKKSKKQQDSTYPIK. The helical transmembrane segment at 454-473 threads the bilayer; sequence NEVASGMILVMAFFLITYTF. Residues 474-705 lie on the Lumenal side of the membrane; the sequence is HSTWVTSEAY…DLDNRGLSRT (232 aa). The interval 525–527 is interacts with target acceptor peptide in protein substrate; it reads WWD. The WWDYG motif motif lies at 525-529; the sequence is WWDYG. Position 530 (Tyr-530) interacts with dolichyl diphosphooligosaccharide. Asn-537 and Asn-544 each carry an N-linked (GlcNAc...) asparagine glycan. Asn-548 is a glycosylation site (N-linked (GlcNAc...) (high mannose) asparagine). The DK motif motif lies at 592-599; it reads DINKFLWM.

The protein belongs to the STT3 family. As to quaternary structure, component of the oligosaccharyltransferase (OST) complex. There are 2 OST complexes, OST-A and OST-B, which contain STT3A or STT3B as catalytic subunit, respectively. OST-A and OST-B contain common core subunits RPN1, RPN2, OST48, OST4, DAD1 and TMEM258, and OST-A contains DC2/OSTC and KRTCAP2/KCP2 specific accessory subunits. OST-A complex assembly occurs through the formation of 3 subcomplexes. Subcomplex 1 contains RPN1 and TMEM258, subcomplex 2 contains the OST-A-specific subunits STT3A, DC2/OSTC, and KCP2 as well as the core subunit OST4, and subcomplex 3 contains RPN2, DAD1, and OST48. The OST-A complex can form stable complexes with the Sec61 complex or with both the Sec61 and TRAP complexes. The cofactor is Mg(2+). It depends on Mn(2+) as a cofactor.

The protein localises to the endoplasmic reticulum membrane. It carries out the reaction a di-trans,poly-cis-dolichyl diphosphooligosaccharide + L-asparaginyl-[protein] = N(4)-(oligosaccharide-(1-&gt;4)-N-acetyl-beta-D-glucosaminyl-(1-&gt;4)-N-acetyl-beta-D-glucosaminyl)-L-asparaginyl-[protein] + a di-trans,poly-cis-dolichyl diphosphate + H(+). It functions in the pathway protein modification; protein glycosylation. In terms of biological role, catalytic subunit of the oligosaccharyl transferase (OST) complex that catalyzes the initial transfer of a defined glycan (Glc(3)Man(9)GlcNAc(2) in eukaryotes) from the lipid carrier dolichol-pyrophosphate to an asparagine residue within an Asn-X-Ser/Thr consensus motif in nascent polypeptide chains, the first step in protein N-glycosylation. N-glycosylation occurs cotranslationally and the complex associates with the Sec61 complex at the channel-forming translocon complex that mediates protein translocation across the endoplasmic reticulum (ER). All subunits are required for a maximal enzyme activity. This subunit contains the active site and the acceptor peptide and donor lipid-linked oligosaccharide (LLO) binding pockets. STT3A is present in the majority of OST complexes and mediates cotranslational N-glycosylation of most sites on target proteins, while STT3B-containing complexes are required for efficient post-translational glycosylation and mediate glycosylation of sites that have been skipped by STT3A. STT3A-containing OST-A complex is also required to prevent hyperglycosylation of some target proteins by preventing glycosylation of facultative sites before folding of target proteins is completed. The polypeptide is Dolichyl-diphosphooligosaccharide--protein glycosyltransferase subunit STT3A (Canis lupus familiaris (Dog)).